The sequence spans 853 residues: cGMP-dependent protein kinase (853 aa).

The tract at residues M1 to D29 is autoinhibitory segment. CNMP-binding domain stretches follow at residues V58–S173, V176–G275, I295–N398, and I418–I517. Residues K113, G122, E123, A125, R132, and S133 each contribute to the 3',5'-cyclic GMP site. 3',5'-cyclic GMP contacts are provided by R473, G482, E483, A485, R492, and T493. One can recognise a Protein kinase domain in the interval L541 to F798. ATP contacts are provided by residues I547–V555 and K570. D664 functions as the Proton acceptor in the catalytic mechanism. Residues S799–F853 form the AGC-kinase C-terminal domain. A disordered region spans residues D827 to F853. Positions E832–F853 are enriched in acidic residues.

This sequence belongs to the protein kinase superfamily. AGC Ser/Thr protein kinase family. cGMP subfamily. As to quaternary structure, monomer. Mg(2+) serves as cofactor. In terms of processing, autophosphorylated.

It is found in the cytoplasm. It localises to the endoplasmic reticulum membrane. It catalyses the reaction L-seryl-[protein] + ATP = O-phospho-L-seryl-[protein] + ADP + H(+). It carries out the reaction L-threonyl-[protein] + ATP = O-phospho-L-threonyl-[protein] + ADP + H(+). Activated by cGMP. Not activated by cAMP. cGMP binding allosterically triggers a conformational change at the alpha C-helix of cGMP-binding domain 4, which bridges the regulatory and catalytic domains, causing the capping triad, composed of Arg-484, Gln-532 and Asp-533, to form and stabilize the active conformation. The cGMP-binding domains acts cooperatively to activate PKG. In terms of biological role, serine/threonine protein kinase which acts as a downstream effector of the second messenger cGMP. Controls the release of Ca(2+) from intracellular stores by regulating phosphoinositide biosynthesis. Ca(2+) signals are essential for merozoite and sporozoite invasion and egress from host hepatocytes and erythrocytes, and, in the mosquito vector, for gametocyte activation, and ookinete and sporozoite motility. During the host liver stage, regulates the initial invasion of host hepatocytes by sporozoites by regulating sporozoite motility and microneme exocytosis. Following parasite development in the hepatocytes, required for the release of merosomes, a vesicle containing the mature merozoites. During the asexual blood stage, required for the progression from schizont to the ring stage following merozoite invasion of host erythrocytes and for merozoite egress. Regulates merozoite egress by promoting the release of exonemes and micronemes which contain proteins essential for egress. Phosphorylates CDPK1 predominantly at the late schizont stage; phosphorylation at 'Ser-64' regulates CDPK1 protein-protein interaction and phosphorylation at 'Thr-231' may regulate CDPK1 kinase activity. In the mosquito vector, required for the initiation of gametogenesis induced by xanthurenic acid, specifically the gametocyte differentiation from the crescent-shaped form to the spherical form. Required for the gliding motility of ookinetes to reach and penetrate the midgut epithelium by promoting Ca(2+)-mediated activation of CDPK1 and CDPK4. Also required for microneme secretion in ookinete by promoting Ca(2+)-mediated activation of CDPK3. The sequence is that of cGMP-dependent protein kinase from Plasmodium falciparum (isolate NF54).